The primary structure comprises 329 residues: Acetyl-coenzyme A carboxylase carboxyl transferase subunit alpha (329 aa).

The CoA carboxyltransferase C-terminal domain maps to Gln-40–Glu-294.

Belongs to the AccA family. As to quaternary structure, acetyl-CoA carboxylase is a heterohexamer composed of biotin carboxyl carrier protein (AccB), biotin carboxylase (AccC) and two subunits each of ACCase subunit alpha (AccA) and ACCase subunit beta (AccD).

The protein resides in the cytoplasm. It carries out the reaction N(6)-carboxybiotinyl-L-lysyl-[protein] + acetyl-CoA = N(6)-biotinyl-L-lysyl-[protein] + malonyl-CoA. It participates in lipid metabolism; malonyl-CoA biosynthesis; malonyl-CoA from acetyl-CoA: step 1/1. Its function is as follows. Component of the acetyl coenzyme A carboxylase (ACC) complex. First, biotin carboxylase catalyzes the carboxylation of biotin on its carrier protein (BCCP) and then the CO(2) group is transferred by the carboxyltransferase to acetyl-CoA to form malonyl-CoA. This chain is Acetyl-coenzyme A carboxylase carboxyl transferase subunit alpha, found in Synechococcus sp. (strain CC9311).